A 229-amino-acid chain; its full sequence is Potassium/proton antiporter CemA (229 aa).

3 helical membrane-spanning segments follow: residues 6–26 (AFIP…ISLC), 107–127 (ILHF…SFWG), and 189–209 (ILSG…KYWI).

The protein belongs to the CemA family.

The protein localises to the plastid. It is found in the chloroplast inner membrane. It carries out the reaction K(+)(in) + H(+)(out) = K(+)(out) + H(+)(in). Its function is as follows. Contributes to K(+)/H(+) antiport activity by supporting proton efflux to control proton extrusion and homeostasis in chloroplasts in a light-dependent manner to modulate photosynthesis. Prevents excessive induction of non-photochemical quenching (NPQ) under continuous-light conditions. Indirectly promotes efficient inorganic carbon uptake into chloroplasts. In Arabidopsis thaliana (Mouse-ear cress), this protein is Potassium/proton antiporter CemA.